We begin with the raw amino-acid sequence, 395 residues long: Elongation factor Tu (395 aa).

The tr-type G domain maps to 10–204; it reads KPHVNIGTIG…AVDEYIPTPQ (195 aa). The segment at 19–26 is G1; the sequence is GHVDHGKT. 19–26 serves as a coordination point for GTP; the sequence is GHVDHGKT. Thr26 is a binding site for Mg(2+). The tract at residues 60–64 is G2; sequence GITIS. The tract at residues 81–84 is G3; sequence DCPG. GTP-binding positions include 81-85 and 136-139; these read DCPGH and NKCD. Positions 136–139 are G4; that stretch reads NKCD. Residues 174-176 are G5; sequence SAL.

The protein belongs to the TRAFAC class translation factor GTPase superfamily. Classic translation factor GTPase family. EF-Tu/EF-1A subfamily. Monomer.

The protein resides in the cytoplasm. The catalysed reaction is GTP + H2O = GDP + phosphate + H(+). GTP hydrolase that promotes the GTP-dependent binding of aminoacyl-tRNA to the A-site of ribosomes during protein biosynthesis. In Anoxybacillus flavithermus (strain DSM 21510 / WK1), this protein is Elongation factor Tu.